A 168-amino-acid chain; its full sequence is G/U mismatch-specific DNA glycosylase (168 aa).

It belongs to the uracil-DNA glycosylase (UDG) superfamily. TDG/mug family. In terms of assembly, binds DNA as a monomer.

The protein resides in the cytoplasm. The enzyme catalyses Specifically hydrolyzes mismatched double-stranded DNA and polynucleotides, releasing free uracil.. Its function is as follows. Excises ethenocytosine and uracil, which can arise by alkylation or deamination of cytosine, respectively, from the corresponding mispairs with guanine in ds-DNA. It is capable of hydrolyzing the carbon-nitrogen bond between the sugar-phosphate backbone of the DNA and the mispaired base. The complementary strand guanine functions in substrate recognition. Required for DNA damage lesion repair in stationary-phase cells. The sequence is that of G/U mismatch-specific DNA glycosylase from Klebsiella pneumoniae (strain 342).